A 126-amino-acid chain; its full sequence is MPNLQGNRTLTEWLTLLLGVIVLLVGLFFVIGGADLAMLGGSTYYVLCGILLVASGVFMLMGRTLGAFLYLGALAYTWVWSFWEVGFSPIDLLPRAFGPTILGILVALTIPVLRRMESRRTLRGAV.

4 helical membrane passes run 13 to 33, 41 to 61, 67 to 87, and 92 to 112; these read WLTLLLGVIVLLVGLFFVIGG, GSTYYVLCGILLVASGVFMLM, AFLYLGALAYTWVWSFWEVGF, and LLPRAFGPTILGILVALTIPV.

The protein localises to the cell membrane. The catalysed reaction is glycerol + A = dihydroxyacetone + AH2. Catalyzes the oxidation of glycerol to glycerone. Also acts, more slowly, on a number of other polyols including D-sorbitol, D-arabinitol, D-mannitol, meso-erythritol, adonitol and propylene glycol. The protein is Glycerol dehydrogenase small subunit (sldB) of Gluconobacter thailandicus.